A 295-amino-acid chain; its full sequence is ATP-dependent (S)-NAD(P)H-hydrate dehydratase (295 aa).

The region spanning 9–289 (LLERARNLVP…DQIHQVFDDL (281 aa)) is the YjeF C-terminal domain. (6S)-NADPHX contacts are provided by residues Gly109 and 162–168 (NAIEFCR). Residues 193–197 (KGLND) and 214–223 (GSGRRCGGQG) contribute to the ATP site. Asp224 provides a ligand contact to (6S)-NADPHX.

This sequence belongs to the NnrD/CARKD family. It depends on Mg(2+) as a cofactor.

The catalysed reaction is (6S)-NADHX + ATP = ADP + phosphate + NADH + H(+). The enzyme catalyses (6S)-NADPHX + ATP = ADP + phosphate + NADPH + H(+). Functionally, catalyzes the dehydration of the S-form of NAD(P)HX at the expense of ATP, which is converted to ADP. Together with NAD(P)HX epimerase, which catalyzes the epimerization of the S- and R-forms, the enzyme allows the repair of both epimers of NAD(P)HX, a damaged form of NAD(P)H that is a result of enzymatic or heat-dependent hydration. The chain is ATP-dependent (S)-NAD(P)H-hydrate dehydratase from Anopheles darlingi (Mosquito).